Here is a 94-residue protein sequence, read N- to C-terminus: Integration host factor subunit beta (94 aa).

The protein belongs to the bacterial histone-like protein family. In terms of assembly, heterodimer of an alpha and a beta chain.

This protein is one of the two subunits of integration host factor, a specific DNA-binding protein that functions in genetic recombination as well as in transcriptional and translational control. The polypeptide is Integration host factor subunit beta (Nitrosospira multiformis (strain ATCC 25196 / NCIMB 11849 / C 71)).